The chain runs to 538 residues: Putative cysteine ligase BshC (538 aa).

Residues 248–268 are a coiled coil; it reads ISKYKEVQEGLRNQQEVIKEL.

The protein belongs to the BshC family.

Involved in bacillithiol (BSH) biosynthesis. May catalyze the last step of the pathway, the addition of cysteine to glucosamine malate (GlcN-Mal) to generate BSH. The polypeptide is Putative cysteine ligase BshC (Bacillus cereus (strain B4264)).